Reading from the N-terminus, the 285-residue chain is Dihydropteroate synthase (285 aa).

The Pterin-binding domain maps to 25–271; the sequence is TLVMGILNVT…DVKQIARMAK (247 aa). A Mg(2+)-binding site is contributed by Asn-32. Residues Thr-72, Asp-106, Asn-125, Asp-189, Lys-225, and 259-261 contribute to the (7,8-dihydropterin-6-yl)methyl diphosphate site; that span reads RVH.

The protein belongs to the DHPS family. Mg(2+) is required as a cofactor.

It carries out the reaction (7,8-dihydropterin-6-yl)methyl diphosphate + 4-aminobenzoate = 7,8-dihydropteroate + diphosphate. Its pathway is cofactor biosynthesis; tetrahydrofolate biosynthesis; 7,8-dihydrofolate from 2-amino-4-hydroxy-6-hydroxymethyl-7,8-dihydropteridine diphosphate and 4-aminobenzoate: step 1/2. Its function is as follows. Catalyzes the condensation of para-aminobenzoate (pABA) with 6-hydroxymethyl-7,8-dihydropterin diphosphate (DHPt-PP) to form 7,8-dihydropteroate (H2Pte), the immediate precursor of folate derivatives. The sequence is that of Dihydropteroate synthase (sul) from Bacillus subtilis (strain 168).